A 259-amino-acid chain; its full sequence is Activator of lactoyl-CoA dehydratase (259 aa).

Positions 125 and 164 each coordinate [4Fe-4S] cluster.

Homodimer. The cofactor is [4Fe-4S] cluster.

In terms of biological role, required for the activation of lactoyl-CoA dehydratase. This protein is extremely sensitive towards oxygen. The protein is Activator of lactoyl-CoA dehydratase (lcdC) of Anaerotignum propionicum (Clostridium propionicum).